The following is a 721-amino-acid chain: BBSome complex member BBS2 (721 aa).

A coiled-coil region spans residues 325–369; it reads KGNLLDTSVEQGLIRELSQKKQNLLLELRNYEENTKAELSSPLNE.

Part of BBSome complex, that contains BBS1, BBS2, BBS4, BBS5, BBS7, BBS8/TTC8, BBS9 and BBIP10. Interacts (via C-terminus) with BBS7. Interacts (via coiled coil domain) with MKKS. Interacts with CCDC28B. Interacts with DLEC1.

The protein localises to the cell projection. Its subcellular location is the cilium membrane. It localises to the cytoplasm. It is found in the cytoskeleton. The protein resides in the microtubule organizing center. The protein localises to the centrosome. Its subcellular location is the centriolar satellite. Its function is as follows. The BBSome complex is thought to function as a coat complex required for sorting of specific membrane proteins to the primary cilia. The BBSome complex is required for ciliogenesis but is dispensable for centriolar satellite function. This ciliogenic function is mediated in part by the Rab8 GDP/GTP exchange factor, which localizes to the basal body and contacts the BBSome. Rab8(GTP) enters the primary cilium and promotes extension of the ciliary membrane. Firstly the BBSome associates with the ciliary membrane and binds to RAB3IP/Rabin8, the guanosyl exchange factor (GEF) for Rab8 and then the Rab8-GTP localizes to the cilium and promotes docking and fusion of carrier vesicles to the base of the ciliary membrane. The BBSome complex, together with the LTZL1, controls SMO ciliary trafficking and contributes to the sonic hedgehog (SHH) pathway regulation. Required for proper BBSome complex assembly and its ciliary localization. This chain is BBSome complex member BBS2 (Bbs2), found in Rattus norvegicus (Rat).